The chain runs to 179 residues: ATP synthase subunit delta (179 aa).

It belongs to the ATPase delta chain family. In terms of assembly, F-type ATPases have 2 components, F(1) - the catalytic core - and F(0) - the membrane proton channel. F(1) has five subunits: alpha(3), beta(3), gamma(1), delta(1), epsilon(1). F(0) has three main subunits: a(1), b(2) and c(10-14). The alpha and beta chains form an alternating ring which encloses part of the gamma chain. F(1) is attached to F(0) by a central stalk formed by the gamma and epsilon chains, while a peripheral stalk is formed by the delta and b chains.

It is found in the cell inner membrane. Its function is as follows. F(1)F(0) ATP synthase produces ATP from ADP in the presence of a proton or sodium gradient. F-type ATPases consist of two structural domains, F(1) containing the extramembraneous catalytic core and F(0) containing the membrane proton channel, linked together by a central stalk and a peripheral stalk. During catalysis, ATP synthesis in the catalytic domain of F(1) is coupled via a rotary mechanism of the central stalk subunits to proton translocation. This protein is part of the stalk that links CF(0) to CF(1). It either transmits conformational changes from CF(0) to CF(1) or is implicated in proton conduction. The protein is ATP synthase subunit delta of Paraburkholderia phymatum (strain DSM 17167 / CIP 108236 / LMG 21445 / STM815) (Burkholderia phymatum).